Reading from the N-terminus, the 339-residue chain is MRVYYDRDADLNLIKGKKVAVVGYGSQGHAHALNMRDSGVKEVVVALRPGSATAKKAEAEGFKVMSPADAAKWADVVMMLTPDELQGDIYRESLADNMKHGAALLFAHGLNVHFNLIEPRPDLDVLMVAPKGPGHTVRSEYQRGGGVPTLIAIAQDASGNAHDLGLSYASAIGGGRAGVIETTFKEECETDLFGEQVVLCGGLVELIRAGFETLVEAGYAPEMAYFECLHEVKLIVDLIYEGGIANMNYSISNTAEYGEYVTGPRIITPETKAEMKRVLTDIQTGKFTRDWMLENKVNQASFKATRARANAHPIEEVGEKLRAMMPWIKAKALVDKTKN.

A KARI N-terminal Rossmann domain is found at 1–182 (MRVYYDRDAD…GGGRAGVIET (182 aa)). NADP(+)-binding positions include 24-27 (YGSQ), Arg-48, Ser-51, Thr-53, and 83-86 (DELQ). His-108 is an active-site residue. Gly-134 lines the NADP(+) pocket. The region spanning 183-328 (TFKEECETDL…EKLRAMMPWI (146 aa)) is the KARI C-terminal knotted domain. Residues Asp-191, Glu-195, Glu-227, and Glu-231 each coordinate Mg(2+). Position 252 (Ser-252) interacts with substrate.

The protein belongs to the ketol-acid reductoisomerase family. Mg(2+) serves as cofactor.

It catalyses the reaction (2R)-2,3-dihydroxy-3-methylbutanoate + NADP(+) = (2S)-2-acetolactate + NADPH + H(+). The catalysed reaction is (2R,3R)-2,3-dihydroxy-3-methylpentanoate + NADP(+) = (S)-2-ethyl-2-hydroxy-3-oxobutanoate + NADPH + H(+). It functions in the pathway amino-acid biosynthesis; L-isoleucine biosynthesis; L-isoleucine from 2-oxobutanoate: step 2/4. The protein operates within amino-acid biosynthesis; L-valine biosynthesis; L-valine from pyruvate: step 2/4. Functionally, involved in the biosynthesis of branched-chain amino acids (BCAA). Catalyzes an alkyl-migration followed by a ketol-acid reduction of (S)-2-acetolactate (S2AL) to yield (R)-2,3-dihydroxy-isovalerate. In the isomerase reaction, S2AL is rearranged via a Mg-dependent methyl migration to produce 3-hydroxy-3-methyl-2-ketobutyrate (HMKB). In the reductase reaction, this 2-ketoacid undergoes a metal-dependent reduction by NADPH to yield (R)-2,3-dihydroxy-isovalerate. This chain is Ketol-acid reductoisomerase (NADP(+)), found in Xanthobacter autotrophicus (strain ATCC BAA-1158 / Py2).